We begin with the raw amino-acid sequence, 1099 residues long: ATP-dependent helicase/deoxyribonuclease subunit B (1099 aa).

4 residues coordinate [4Fe-4S] cluster: Cys-766, Cys-1056, Cys-1059, and Cys-1065.

This sequence belongs to the helicase family. AddB/RexB type 2 subfamily. As to quaternary structure, heterodimer of AddA and RexB. Mg(2+) is required as a cofactor. [4Fe-4S] cluster serves as cofactor.

Its function is as follows. The heterodimer acts as both an ATP-dependent DNA helicase and an ATP-dependent, dual-direction single-stranded exonuclease. Recognizes the chi site generating a DNA molecule suitable for the initiation of homologous recombination. This subunit has 5' -&gt; 3' nuclease activity but not helicase activity. In Lactococcus lactis subsp. cremoris (strain SK11), this protein is ATP-dependent helicase/deoxyribonuclease subunit B.